Reading from the N-terminus, the 152-residue chain is Outer membrane protein assembly factor BamE (152 aa).

The signal sequence occupies residues 1-32; it reads MIDQNHDSEEQAQMQKLTRTVTLTVALTLVSG. A lipid anchor (N-palmitoyl cysteine) is attached at cysteine 33. The S-diacylglycerol cysteine moiety is linked to residue cysteine 33. Residues 114–152 form a disordered region; it reads IDRHGDFSRPPSVADERGIGPTDSTNARGNLLNARPDDE.

Belongs to the BamE family. As to quaternary structure, part of the Bam complex.

It is found in the cell outer membrane. In terms of biological role, part of the outer membrane protein assembly complex, which is involved in assembly and insertion of beta-barrel proteins into the outer membrane. This is Outer membrane protein assembly factor BamE from Halomonas elongata (strain ATCC 33173 / DSM 2581 / NBRC 15536 / NCIMB 2198 / 1H9).